We begin with the raw amino-acid sequence, 194 residues long: Probable GTP-binding protein EngB (194 aa).

The EngB-type G domain occupies 22–194 (KIPQIAIVGK…LRIFEEVIEK (173 aa)). GTP contacts are provided by residues 30–37 (GKSNVGKS), 57–61 (GKTRG), 75–78 (DLPG), 142–145 (TKAD), and 173–175 (FSA). Mg(2+)-binding residues include S37 and T59.

The protein belongs to the TRAFAC class TrmE-Era-EngA-EngB-Septin-like GTPase superfamily. EngB GTPase family. It depends on Mg(2+) as a cofactor.

Necessary for normal cell division and for the maintenance of normal septation. This is Probable GTP-binding protein EngB from Caldanaerobacter subterraneus subsp. tengcongensis (strain DSM 15242 / JCM 11007 / NBRC 100824 / MB4) (Thermoanaerobacter tengcongensis).